The following is a 474-amino-acid chain: tRNA-2-methylthio-N(6)-dimethylallyladenosine synthase (474 aa).

Residues 3–120 (KKLHIKTWGC…LPEMINSVRG (118 aa)) enclose the MTTase N-terminal domain. Residues cysteine 12, cysteine 49, cysteine 83, cysteine 157, cysteine 161, and cysteine 164 each coordinate [4Fe-4S] cluster. The Radical SAM core domain maps to 143-375 (RAEGPTAFVS…QERINQQAMA (233 aa)). Residues 378 to 441 (RRMLGTTQRI…PNSLRGKVVR (64 aa)) enclose the TRAM domain.

This sequence belongs to the methylthiotransferase family. MiaB subfamily. In terms of assembly, monomer. [4Fe-4S] cluster serves as cofactor.

It localises to the cytoplasm. The enzyme catalyses N(6)-dimethylallyladenosine(37) in tRNA + (sulfur carrier)-SH + AH2 + 2 S-adenosyl-L-methionine = 2-methylsulfanyl-N(6)-dimethylallyladenosine(37) in tRNA + (sulfur carrier)-H + 5'-deoxyadenosine + L-methionine + A + S-adenosyl-L-homocysteine + 2 H(+). In terms of biological role, catalyzes the methylthiolation of N6-(dimethylallyl)adenosine (i(6)A), leading to the formation of 2-methylthio-N6-(dimethylallyl)adenosine (ms(2)i(6)A) at position 37 in tRNAs that read codons beginning with uridine. The chain is tRNA-2-methylthio-N(6)-dimethylallyladenosine synthase from Salmonella paratyphi A (strain ATCC 9150 / SARB42).